A 210-amino-acid chain; its full sequence is Outer-membrane lipoprotein carrier protein (210 aa).

A signal peptide spans 1–23; that stretch reads MKKRIQKTILTVLFSSLSSIAFA.

It belongs to the LolA family. In terms of assembly, monomer.

Its subcellular location is the periplasm. Participates in the translocation of lipoproteins from the inner membrane to the outer membrane. Only forms a complex with a lipoprotein if the residue after the N-terminal Cys is not an aspartate (The Asp acts as a targeting signal to indicate that the lipoprotein should stay in the inner membrane). The polypeptide is Outer-membrane lipoprotein carrier protein (Haemophilus ducreyi (strain 35000HP / ATCC 700724)).